We begin with the raw amino-acid sequence, 703 residues long: Cycloartenol synthase (703 aa).

PFTB repeat units follow at residues 59–103 and 106–148; these read IKKA…QLPE and QREI…RLLG. Catalysis depends on Asp-435, which acts as the Proton donor. 4 PFTB repeats span residues 461 to 503, 539 to 579, 587 to 628, and 645 to 686; these read IADG…QNIM, IARG…VASG, IVKA…VNTG, and IERG…KNIF.

It belongs to the terpene cyclase/mutase family.

It catalyses the reaction (S)-2,3-epoxysqualene = cycloartenol. Converts oxidosqualene to cycloartenol (in vitro). This is Cycloartenol synthase (cas1) from Dictyostelium discoideum (Social amoeba).